The primary structure comprises 141 residues: Large ribosomal subunit protein uL16 (141 aa).

Belongs to the universal ribosomal protein uL16 family. As to quaternary structure, part of the 50S ribosomal subunit.

Its function is as follows. Binds 23S rRNA and is also seen to make contacts with the A and possibly P site tRNAs. This Thermus thermophilus (strain ATCC BAA-163 / DSM 7039 / HB27) protein is Large ribosomal subunit protein uL16.